Reading from the N-terminus, the 386-residue chain is Large ribosomal subunit protein uL4 (386 aa).

Over residues 341–357 (VEQRRLKEKQAKLDQKR) the composition is skewed to basic and acidic residues. The tract at residues 341-386 (VEQRRLKEKQAKLDQKRGIATPVEGAGKGRPRKTTAKPTKAKAGKK) is disordered. Residues 369-386 (GRPRKTTAKPTKAKAGKK) show a composition bias toward basic residues.

Belongs to the universal ribosomal protein uL4 family.

This Urechis caupo (Innkeeper worm) protein is Large ribosomal subunit protein uL4 (RPL4).